The sequence spans 762 residues: Palmitoyltransferase ZDHHC8 (762 aa).

At 1–13 (MPRSPGTRLKPAK) the chain is on the cytoplasmic side. Residues 14–34 (YIPVATAAALLVGSSTLFFVF) form a helical membrane-spanning segment. Over 35–52 (TCPWLTRAVSPAIPVYNG) the chain is Lumenal. A helical membrane pass occupies residues 53-73 (ILFLFVLANFSMATFMDPGVF). The Cytoplasmic segment spans residues 74–148 (PRADEDEDKE…NCIGRRNYRY (75 aa)). The region spanning 104-154 (KWCATCHFYRPPRCSHCSVCDNCVEDFDHHCPWVNNCIGRRNYRYFFLFLL) is the DHHC domain. The S-palmitoyl cysteine intermediate role is filled by Cys-134. The helical transmembrane segment at 149-169 (FFLFLLSLSAHMVGVVAFGLL) threads the bilayer. At 170–190 (YVLNHSEGLGAAHTTITMAVM) the chain is on the lumenal side. Residues 191 to 211 (CVAGLFFIPVIGLTGFHVVLV) traverse the membrane as a helical segment. The Cytoplasmic portion of the chain corresponds to 212–762 (TRGRTTNEQV…VGGTTYEISV (551 aa)). Disordered regions lie at residues 289-350 (GLKA…PPTP), 362-423 (GPKT…TTDA), 436-537 (ASRR…SPVR), and 551-574 (ERKDREERERLLRSQTDSLFGDSG). Position 335 is a phosphoserine (Ser-335). Residues 408 to 417 (LRPPYPPSPP) are compositionally biased toward pro residues. Arg-439 carries the post-translational modification Omega-N-methylarginine. Over residues 471 to 485 (RNGSLSYDSLLNPGS) the composition is skewed to polar residues. Pro residues predominate over residues 511 to 521 (PSDPPRPPPRS). The segment covering 551 to 562 (ERKDREERERLL) has biased composition (basic and acidic residues). A phosphoserine mark is found at Ser-603 and Ser-624. The segment covering 626-644 (SSLSSSMSRAPRTSSSSLQ) has biased composition (low complexity). Disordered stretches follow at residues 626–684 (SSLS…SYTG) and 707–744 (DHPQLKTPPSKLNGQSPGMARLGPAASPMGPNASPARH). Ser-672, Ser-679, Ser-722, and Ser-740 each carry phosphoserine.

This sequence belongs to the DHHC palmitoyltransferase family. ERF2/ZDHHC9 subfamily. In terms of tissue distribution, expressed in brain cortex and hippocampus.

The protein localises to the golgi apparatus membrane. Its subcellular location is the mitochondrion membrane. It catalyses the reaction L-cysteinyl-[protein] + hexadecanoyl-CoA = S-hexadecanoyl-L-cysteinyl-[protein] + CoA. In terms of biological role, palmitoyltransferase that catalyzes the addition of palmitate onto various protein substrates and therefore functions in several unrelated biological processes. Through the palmitoylation of ABCA1 regulates the localization of the transporter to the plasma membrane and thereby regulates its function in cholesterol and phospholipid efflux. Could also pamitoylate the D(2) dopamine receptor DRD2 and regulate its stability and localization to the plasma membrane. Could also play a role in glutamatergic transmission. This Mus musculus (Mouse) protein is Palmitoyltransferase ZDHHC8.